A 944-amino-acid polypeptide reads, in one-letter code: MNNIAYKWQTRWEEDKIYESNPNPSKPKFFTTVAFPYPNSPWHIGHGRTYVTGDILARYKRMRGYNVLFPMAFHYTGTPIMAMADAIAKGDKELIETFKDIYEISPDVIPRMSDPLFMANYFKEDIKASMREIGLGIDWRREFTTIDPEFSSFVTWQFHKLQSKGYIVKDTHPVGWCPVHHIPVGMHDTKGDVEPEIGEFVLIYFNSEKGIFPAATLRPETIFGATALWINPSEMYVVASMLGKKMILSEKAAAKLSFQIDDIEIEEKIKGSKLVGLKVENPITGKHIAVLGADFVDVSLGTGVVMSVPAHAPFDYYYSKKTFKNNNIEIIPVITVEGLGNALAKDVVEKNNPKSDEDLKKLTEYVYRTEYNKGVLRSDLGNLIREEYRNELKSLGGLPVPKGRELITNFLISKGLGRKIFEVMNKPVYCRCGTEIVVKILKDQWFLDYSNKEWKELARKSLSKINVIPEESRKDFEFTIEWLEKRACARTRGLGTPLPWDKKWIIESLSDSTIYMAYYTISHKIKQYKLSPSKLTQEFWDYVMLGIGNLEEISEKTGIPSNIIKEFREEFLYWYPLDIRHSGKDLIPNHLTFFIFNHAAIFQENLWPKAIAVNGLVLYEGKKMSKSLRNIIPLRKGLKMYGVDVMRIAVSSTADMGSDVNFSESLVKTVGETLRKMYELFKSLDNYTGDILGFPEKWLLSRIYEITSSTTRHMEALELRDAVNELLFVFSSDLDEYFGMVSAEGREANNKVLREVLTIWLKLITPFAPHLAEEIWHEILKQKTYIVNEGWPEVEGSKMDELTLLEHEYMKRIVEDIRSILNIFKGTPKLIKIYALNDSRYMELLRDAIVANGQMKKFMDIHKPKSREDARILQKIFNESLEIDDKMKKLVTNYNINEVDVLNKLSKYIRRKLNVDILIEPYDEEVKKTYNKEAMPLRPAIIIE.

Positions 36–46 (PYPNSPWHIGH) match the 'HIGH' region motif. A 'KMSKS' region motif is present at residues 623-627 (KMSKS). K626 contacts ATP.

Belongs to the class-I aminoacyl-tRNA synthetase family.

It localises to the cytoplasm. It carries out the reaction tRNA(Leu) + L-leucine + ATP = L-leucyl-tRNA(Leu) + AMP + diphosphate. The polypeptide is Leucine--tRNA ligase 2 (Saccharolobus solfataricus (strain ATCC 35092 / DSM 1617 / JCM 11322 / P2) (Sulfolobus solfataricus)).